Reading from the N-terminus, the 381-residue chain is MIISSASDYREAARRRVPPFMFHYADGGSYAEQTLARNVSDLENIALRQRVLKDMSELDTSIELFGEKLSMPTILAPVGACGMYARRGEVQAAQAADNKGVPFTLSTVSICPIEEVAPAIKRPMWFQLYVLKDRGFMKNALERAKAAGCSTLVFTVDMPTPGARYRDMHSGMSGPYKEIRRVLQGFTHPFWAYDVGIKGKPHTLGNVSTYMGRQIGLDDYIGWLTENFDPSISWKDLEWIREFWEGPMVIKGILDPEDAKDAVRFGADGIVVSNHGGRQLDGVLSSARALPPIADAVKGDIKIIADSGIRNGLDIVRMLALGADATMLGRAFVYALGAAGRQGVENMLDIFKKEMRVAMTLTSNRTIADIKPEALVDLSKL.

The FMN hydroxy acid dehydrogenase domain maps to 1–380 (MIISSASDYR…KPEALVDLSK (380 aa)). Position 24 (Tyr-24) interacts with substrate. Residues Ser-106 and Gln-127 each coordinate FMN. Tyr-129 is a substrate binding site. Thr-155 provides a ligand contact to FMN. Substrate is bound at residue Arg-164. Lys-251 contacts FMN. Catalysis depends on His-275, which acts as the Proton acceptor. Position 278 (Arg-278) interacts with substrate. Position 306 to 330 (306 to 330 (DSGIRNGLDIVRMLALGADATMLGR)) interacts with FMN.

This sequence belongs to the FMN-dependent alpha-hydroxy acid dehydrogenase family. FMN serves as cofactor.

It is found in the cell inner membrane. It carries out the reaction (S)-lactate + A = pyruvate + AH2. Its function is as follows. Catalyzes the conversion of L-lactate to pyruvate. Is coupled to the respiratory chain. This chain is L-lactate dehydrogenase, found in Haemophilus influenzae (strain PittEE).